The chain runs to 1368 residues: Beclin-1-like protein A (1368 aa).

2 stretches are compositionally biased toward low complexity: residues 24–57 and 122–135; these read GSGS…NNGP and NSII…SPSN. Disordered regions lie at residues 24–64, 122–249, 331–431, 819–874, and 992–1048; these read GSGS…PSSE, NSII…SLMM, NKNN…STNS, TITP…NNNN, and IDGN…NDNN. The span at 136–147 shows a compositional bias: polar residues; that stretch reads AITRNNSFNMDP. Low complexity predominate over residues 148 to 167; that stretch reads NNNNNNNNNNNNNNNNNNNN. Residues 168–177 show a composition bias toward polar residues; that stretch reads GEYMNSSIVF. Low complexity predominate over residues 179 to 246; it reads NNVNNNNNNP…INNSVNSVNS (68 aa). 2 stretches are compositionally biased toward low complexity: residues 992-1005 and 1015-1048; these read IDGN…NDNN and NNNN…NDNN. Positions 1047–1150 form a coiled coil; that stretch reads NNYNFENEIN…AIRDQLERVS (104 aa).

This sequence belongs to the beclin family.

It is found in the endosome membrane. Involved in autophagy. May be required to recruit the atg8-phosphatidylinositol conjugate and the atg12-atg5 conjugate to the pre-autophagosomal structure. Required for normal survival when exposed to pathogenic bacteria S.typhimurium by promoting autophagic degradation of intracellular S.typhimurium. The chain is Beclin-1-like protein A (atg6A) from Dictyostelium discoideum (Social amoeba).